The primary structure comprises 200 residues: Gamma-glutamyl-CDP-amidate hydrolase (200 aa).

Residues 20–200 form the Glutamine amidotransferase type-1 domain; sequence ECLALDWGKL…LKEWFSLIKE (181 aa). The active-site Nucleophile is the C101. Residues H178 and E180 contribute to the active site.

The catalysed reaction is N(5)-(cytidine 5'-diphosphoramidyl)-L-glutamine + H2O = cytidine 5'-diphosphoramidate + L-glutamate + H(+). The protein operates within capsule biogenesis; capsule polysaccharide biosynthesis. Its function is as follows. Involved in the biosynthesis of the O-methyl phosphoramidate (MeOPN) group found on the capsular polysaccharide (CPS) of C.jejuni. Catalyzes the hydrolysis of CDP-L-glutamine to L-glutamate and cytidine diphosphoramidate. This Campylobacter jejuni subsp. jejuni serotype O:2 (strain ATCC 700819 / NCTC 11168) protein is Gamma-glutamyl-CDP-amidate hydrolase.